The primary structure comprises 171 residues: UPF0260 protein Nham_1404 (171 aa).

It belongs to the UPF0260 family.

The chain is UPF0260 protein Nham_1404 from Nitrobacter hamburgensis (strain DSM 10229 / NCIMB 13809 / X14).